We begin with the raw amino-acid sequence, 358 residues long: UDP-N-acetylglucosamine--N-acetylmuramyl-(pentapeptide) pyrophosphoryl-undecaprenol N-acetylglucosamine transferase (358 aa).

Residues 13-15 (TGG), N125, R162, S190, I244, 263-268 (ALTVAE), and Q289 contribute to the UDP-N-acetyl-alpha-D-glucosamine site.

Belongs to the glycosyltransferase 28 family. MurG subfamily.

It localises to the cell inner membrane. The catalysed reaction is di-trans,octa-cis-undecaprenyl diphospho-N-acetyl-alpha-D-muramoyl-L-alanyl-D-glutamyl-meso-2,6-diaminopimeloyl-D-alanyl-D-alanine + UDP-N-acetyl-alpha-D-glucosamine = di-trans,octa-cis-undecaprenyl diphospho-[N-acetyl-alpha-D-glucosaminyl-(1-&gt;4)]-N-acetyl-alpha-D-muramoyl-L-alanyl-D-glutamyl-meso-2,6-diaminopimeloyl-D-alanyl-D-alanine + UDP + H(+). The protein operates within cell wall biogenesis; peptidoglycan biosynthesis. In terms of biological role, cell wall formation. Catalyzes the transfer of a GlcNAc subunit on undecaprenyl-pyrophosphoryl-MurNAc-pentapeptide (lipid intermediate I) to form undecaprenyl-pyrophosphoryl-MurNAc-(pentapeptide)GlcNAc (lipid intermediate II). This chain is UDP-N-acetylglucosamine--N-acetylmuramyl-(pentapeptide) pyrophosphoryl-undecaprenol N-acetylglucosamine transferase, found in Halorhodospira halophila (strain DSM 244 / SL1) (Ectothiorhodospira halophila (strain DSM 244 / SL1)).